The chain runs to 354 residues: Uroporphyrinogen decarboxylase (354 aa).

Residues 27-31, Asp77, Tyr153, Thr208, and His326 each bind substrate; that span reads RQAGR.

It belongs to the uroporphyrinogen decarboxylase family. As to quaternary structure, homodimer.

Its subcellular location is the cytoplasm. The enzyme catalyses uroporphyrinogen III + 4 H(+) = coproporphyrinogen III + 4 CO2. Its pathway is porphyrin-containing compound metabolism; protoporphyrin-IX biosynthesis; coproporphyrinogen-III from 5-aminolevulinate: step 4/4. In terms of biological role, catalyzes the decarboxylation of four acetate groups of uroporphyrinogen-III to yield coproporphyrinogen-III. This chain is Uroporphyrinogen decarboxylase, found in Neisseria meningitidis serogroup C / serotype 2a (strain ATCC 700532 / DSM 15464 / FAM18).